We begin with the raw amino-acid sequence, 218 residues long: Large ribosomal subunit protein uL16 (218 aa).

It belongs to the universal ribosomal protein uL16 family. Component of the large ribosomal subunit. Mature ribosomes consist of a small (40S) and a large (60S) subunit. The 40S subunit contains about 33 different proteins and 1 molecule of RNA (18S). The 60S subunit contains about 49 different proteins and 3 molecules of RNA (28S, 5.8S and 5S).

The polypeptide is Large ribosomal subunit protein uL16 (RpL10) (Drosophila melanogaster (Fruit fly)).